The following is a 545-amino-acid chain: Phenylalanine--tRNA ligase beta subunit (545 aa).

The B5 domain maps to 266 to 342 (LSPALRNINV…IGAGFGNLEA (77 aa)). Positions 320, 326, 329, and 330 each coordinate Mg(2+).

This sequence belongs to the phenylalanyl-tRNA synthetase beta subunit family. Type 2 subfamily. As to quaternary structure, tetramer of two alpha and two beta subunits. Mg(2+) serves as cofactor.

Its subcellular location is the cytoplasm. It carries out the reaction tRNA(Phe) + L-phenylalanine + ATP = L-phenylalanyl-tRNA(Phe) + AMP + diphosphate + H(+). The sequence is that of Phenylalanine--tRNA ligase beta subunit from Methanospirillum hungatei JF-1 (strain ATCC 27890 / DSM 864 / NBRC 100397 / JF-1).